Consider the following 269-residue polypeptide: 2-dehydro-3-deoxyphosphooctonate aldolase (269 aa).

Belongs to the KdsA family.

Its subcellular location is the cytoplasm. The catalysed reaction is D-arabinose 5-phosphate + phosphoenolpyruvate + H2O = 3-deoxy-alpha-D-manno-2-octulosonate-8-phosphate + phosphate. It functions in the pathway carbohydrate biosynthesis; 3-deoxy-D-manno-octulosonate biosynthesis; 3-deoxy-D-manno-octulosonate from D-ribulose 5-phosphate: step 2/3. It participates in bacterial outer membrane biogenesis; lipopolysaccharide biosynthesis. This Chlamydia pneumoniae (Chlamydophila pneumoniae) protein is 2-dehydro-3-deoxyphosphooctonate aldolase (kdsA).